The following is a 203-amino-acid chain: Ras-related protein Rab-24 (203 aa).

Position 17 is a phosphotyrosine (Tyr17). 4 residues coordinate GTP: Gly19, Lys20, Thr21, and Thr40. Mg(2+) contacts are provided by Thr21, Thr40, and Asp63. Residues Asp30–Phe45 form a switch I region. The tract at residues Asp63–Gly80 is switch II. GTP is bound by residues Gly66, Lys121, Asp123, and Lys156. A Phosphotyrosine modification is found at Tyr172. 2 S-geranylgeranyl cysteine lipidation sites follow: Cys200 and Cys201.

This sequence belongs to the small GTPase superfamily. Rab family. Interacts with ZFYVE20. Does not interact with the GDP dissociation inhibitors ARHGDIA and ARHGDIB. It depends on Mg(2+) as a cofactor. Prenylated; prenylation is required for RAB24 localization to autophagosomes. Isoprenylation is inefficient compared to other Rab family members. Post-translationally, phosphorylated at Tyr-17 and Tyr-172. Cytosolic pool of RAB24 is more phosphorylated than the membrane-associated pool. In terms of tissue distribution, widely expressed, with highest expression in brain.

It is found in the cytoplasm. The protein localises to the cytosol. It localises to the membrane. The protein resides in the cytoplasmic vesicle. Its subcellular location is the autophagosome membrane. It is found in the perinuclear region. The protein localises to the cytoskeleton. It localises to the spindle. It catalyses the reaction GTP + H2O = GDP + phosphate + H(+). With respect to regulation, regulated by guanine nucleotide exchange factors (GEFs) which promote the exchange of bound GDP for free GTP. Regulated by GTPase activating proteins (GAPs) which increase the GTP hydrolysis activity. Inhibited by GDP dissociation inhibitors (GDIs). The small GTPases Rab are key regulators of intracellular membrane trafficking, from the formation of transport vesicles to their fusion with membranes. Rabs cycle between an inactive GDP-bound form and an active GTP-bound form that is able to recruit to membranes different sets of downstream effectors directly responsible for vesicle formation, movement, tethering and fusion. RAB24 is an atypical RAB protein that presents low GTPase activity and thereby exists predominantly in the GTP-bound active state. RAB24 is required for the clearance of late autophagic vacuoles under basal conditions. It is not needed for starvation-induced autophagy. Involved in the modulation of meiotic apparatus assembly and meiotic progression during oocyte maturation, possibly through regulation of kinetochore-microtubule interaction. The polypeptide is Ras-related protein Rab-24 (Mus musculus (Mouse)).